An 89-amino-acid polypeptide reads, in one-letter code: Acyl carrier protein MbtL (89 aa).

The 76-residue stretch at Asn8–Pro83 folds into the Carrier domain. Ser43 carries the post-translational modification O-(pantetheine 4'-phosphoryl)serine.

Post-translationally, 4'-phosphopantetheine is transferred from CoA to a specific serine of apo-ACP, leading to the activated holo-ACP form.

Its subcellular location is the cytoplasm. It participates in siderophore biosynthesis; mycobactin biosynthesis. Acyl carrier protein involved in the formation of acyl-S-ACP intermediates within the mycobactin biosynthesis process. The sequence is that of Acyl carrier protein MbtL (mbtL) from Mycolicibacterium paratuberculosis (strain ATCC BAA-968 / K-10) (Mycobacterium paratuberculosis).